Consider the following 362-residue polypeptide: Atypical chemokine receptor 3 (362 aa).

The Extracellular segment spans residues 1–40 (MDLHLFDYSEPGNFSDISWPCNSSDCIVVDTVMCPNMPNK). Residues asparagine 13, asparagine 22, and asparagine 39 are each glycosylated (N-linked (GlcNAc...) asparagine). The chain crosses the membrane as a helical span at residues 41-61 (SVLLYTLSFIYIFIFVIGMIA). The Cytoplasmic segment spans residues 62–81 (NSVVVWVNIQAKTTGYDTHC). Residues 82-102 (YILNLAIADLWVVLTIPVWVV) form a helical membrane-spanning segment. Residues 103 to 118 (SLVQHNQWPMGELTCK) are Extracellular-facing. The cysteines at positions 117 and 196 are disulfide-linked. The chain crosses the membrane as a helical span at residues 119-139 (VTHLIFSINLFGSIFFLTCMS). Residues 140–162 (VDRYLSITYFTNTPSSRKKMVRR) are Cytoplasmic-facing. The helical transmembrane segment at 163–183 (VVCILVWLLAFCVSLPDTYYL) threads the bilayer. Residues 184 to 213 (KTVTSASNNETYCRSFYPEHSIKEWLIGME) lie on the Extracellular side of the membrane. Residues 214-234 (LVSVVLGFAVPFSIIAVFYFL) form a helical membrane-spanning segment. Topologically, residues 235-252 (LARAISASSDQEKHSSRK) are cytoplasmic. The helical transmembrane segment at 253–273 (IIFSYVVVFLVCWLPYHVAVL) threads the bilayer. Residues 274–296 (LDIFSILHYIPFTCRLEHALFTA) are Extracellular-facing. Residues 297-319 (LHVTQCLSLVHCCVNPVLYSFIN) traverse the membrane as a helical segment. Over 320–362 (RNYRYELMKAFIFKYSAKTGLTKLIDASRVSETEYSALEQSTK) the chain is Cytoplasmic. The C-terminal cytoplasmic tail stretch occupies residues 324–362 (YELMKAFIFKYSAKTGLTKLIDASRVSETEYSALEQSTK). 3 positions are modified to phosphoserine: serine 347, serine 350, and serine 355.

Belongs to the G-protein coupled receptor 1 family. Atypical chemokine receptor subfamily. As to quaternary structure, homodimer. Can form heterodimers with CXCR4; heterodimerization may regulate CXCR4 signaling activity. Interacts with ARRB1 and ARRB2. The Ser/Thr residues in the C-terminal cytoplasmic tail may be phosphorylated. In terms of processing, ubiquitinated at the Lys residues in its C-terminal cytoplasmic tail and is essential for correct trafficking from and to the cell membrane. Deubiquitinated by CXCL12-stimulation in a reversible manner. In terms of tissue distribution, expressed in monocytes, basophils, B-cells, umbilical vein endothelial cells (HUVEC) and B-lymphoblastoid cells. Lower expression detected in CD4+ T-lymphocytes and natural killer cells. In the brain, detected in endothelial cells and capillaries, and in mature neurons of the frontal cortex and hippocampus. Expressed in tubular formation in the kidney. Highly expressed in astroglial tumor endothelial, microglial and glioma cells. Expressed at low levels in normal CD34+ progenitor cells, but at very high levels in several myeloid malignant cell lines. Expressed in breast carcinomas but not in normal breast tissue (at protein level).

Its subcellular location is the cell membrane. It localises to the early endosome. The protein localises to the recycling endosome. In terms of biological role, atypical chemokine receptor that controls chemokine levels and localization via high-affinity chemokine binding that is uncoupled from classic ligand-driven signal transduction cascades, resulting instead in chemokine sequestration, degradation, or transcytosis. Also known as interceptor (internalizing receptor) or chemokine-scavenging receptor or chemokine decoy receptor. Acts as a receptor for chemokines CXCL11 and CXCL12/SDF1. Chemokine binding does not activate G-protein-mediated signal transduction but instead induces beta-arrestin recruitment, leading to ligand internalization and activation of MAPK signaling pathway. Required for regulation of CXCR4 protein levels in migrating interneurons, thereby adapting their chemokine responsiveness. In glioma cells, transduces signals via MEK/ERK pathway, mediating resistance to apoptosis. Promotes cell growth and survival. Not involved in cell migration, adhesion or proliferation of normal hematopoietic progenitors but activated by CXCL11 in malignant hemapoietic cells, leading to phosphorylation of ERK1/2 (MAPK3/MAPK1) and enhanced cell adhesion and migration. Plays a regulatory role in CXCR4-mediated activation of cell surface integrins by CXCL12. Required for heart valve development. Regulates axon guidance in the oculomotor system through the regulation of CXCL12 levels. Functionally, (Microbial infection) Acts as a coreceptor with CXCR4 for a restricted number of HIV isolates. The chain is Atypical chemokine receptor 3 from Homo sapiens (Human).